A 139-amino-acid chain; its full sequence is UPF0102 protein Caul_0175 (139 aa).

Belongs to the UPF0102 family.

In Caulobacter sp. (strain K31), this protein is UPF0102 protein Caul_0175.